We begin with the raw amino-acid sequence, 100 residues long: Urease subunit gamma (100 aa).

The protein belongs to the urease gamma subunit family. Heterotrimer of UreA (gamma), UreB (beta) and UreC (alpha) subunits. Three heterotrimers associate to form the active enzyme.

It localises to the cytoplasm. The enzyme catalyses urea + 2 H2O + H(+) = hydrogencarbonate + 2 NH4(+). Its pathway is nitrogen metabolism; urea degradation; CO(2) and NH(3) from urea (urease route): step 1/1. This chain is Urease subunit gamma, found in Marinobacter nauticus (strain ATCC 700491 / DSM 11845 / VT8) (Marinobacter aquaeolei).